A 346-amino-acid polypeptide reads, in one-letter code: B3 domain-containing protein At3g25182 (346 aa).

Residues 168 to 187 (KRRAVEQRKRTGGVKKAKVA) are disordered. Positions 237 to 338 (FNNLLRNDFL…ILCFAMEQRS (102 aa)) form a DNA-binding region, TF-B3.

The protein resides in the nucleus. The polypeptide is B3 domain-containing protein At3g25182 (Arabidopsis thaliana (Mouse-ear cress)).